We begin with the raw amino-acid sequence, 1703 residues long: Gingipain R1 (1703 aa).

Residues 1–20 (MNKFVSIALCSSLLGGMAFA) form the signal peptide. The propeptide occupies 21 to 224 (QQTELGRNPN…RMFMNYEPGR (204 aa)). The Ca(2+) site is built by Asp-302, Val-324, Asp-327, Tyr-329, Glu-331, Glu-385, and His-390. His-435 acts as the Proton donor in catalysis. Catalysis depends on Cys-468, which acts as the Nucleophile. Ca(2+)-binding residues include Phe-473, Glu-482, Asp-516, Glu-517, Glu-520, and His-526. A disordered region spans residues 940–968 (WDAPNGTPNPNPNPNPNPNPGTTTLSESF). Residues 946 to 958 (TPNPNPNPNPNPN) are compositionally biased toward pro residues.

The protein belongs to the peptidase C25 family.

Its subcellular location is the secreted. The catalysed reaction is Hydrolysis of proteins and small molecule substrates, with a preference for Arg in P1.. Functionally, thiol protease. Acts synergistically with RgpB to catalyze the maturation of fimbrial subunits, such as FimA. Its proteolytic activity is a major factor in both periodontal tissue destruction and in evasion of host defense mechanisms. This is Gingipain R1 from Porphyromonas gingivalis (strain ATCC 33277 / DSM 20709 / CIP 103683 / JCM 12257 / NCTC 11834 / 2561).